Reading from the N-terminus, the 797-residue chain is Xaa-Pro dipeptidyl-peptidase (797 aa).

Active-site charge relay system residues include Ser370, Asp490, and His521.

It belongs to the peptidase S15 family. As to quaternary structure, homodimer.

Its subcellular location is the cytoplasm. It carries out the reaction Hydrolyzes Xaa-Pro-|- bonds to release unblocked, N-terminal dipeptides from substrates including Ala-Pro-|-p-nitroanilide and (sequentially) Tyr-Pro-|-Phe-Pro-|-Gly-Pro-|-Ile.. Its function is as follows. Removes N-terminal dipeptides sequentially from polypeptides having unsubstituted N-termini provided that the penultimate residue is proline. The chain is Xaa-Pro dipeptidyl-peptidase from Lacticaseibacillus casei (strain BL23) (Lactobacillus casei).